An 83-amino-acid polypeptide reads, in one-letter code: Mu-theraphotoxin-Hhn2f (83 aa).

An N-terminal signal peptide occupies residues Met-1–Ala-21. A propeptide spanning residues Ser-22–Arg-48 is cleaved from the precursor. 3 disulfide bridges follow: Cys-50-Cys-65, Cys-57-Cys-70, and Cys-64-Cys-77. Leu-81 bears the Leucine amide mark.

It belongs to the neurotoxin 10 (Hwtx-1) family. 15 (Hntx-3) subfamily. In terms of assembly, monomer. As to expression, expressed by the venom gland.

The protein resides in the secreted. Functionally, lethal neurotoxin. Selectively blocks tetrodotoxin-sensitive voltage-gated sodium channels (Nav). Does not affect tetrodotoxin-resistant voltage-gated sodium channels or calcium channels. This is Mu-theraphotoxin-Hhn2f from Cyriopagopus hainanus (Chinese bird spider).